The sequence spans 482 residues: tRNA-2-methylthio-N(6)-dimethylallyladenosine synthase (482 aa).

Positions 3–120 constitute an MTTase N-terminal domain; the sequence is KKLHIKTWGC…LPEMIKQVQG (118 aa). [4Fe-4S] cluster is bound by residues Cys-12, Cys-49, Cys-83, Cys-158, Cys-162, and Cys-165. Residues 144–376 form the Radical SAM core domain; it reads KADGPSAFVS…QNRITQMAQQ (233 aa). In terms of domain architecture, TRAM spans 379 to 442; the sequence is RQMFDTEQRI…PNSLRGDLIR (64 aa).

The protein belongs to the methylthiotransferase family. MiaB subfamily. As to quaternary structure, monomer. The cofactor is [4Fe-4S] cluster.

Its subcellular location is the cytoplasm. The catalysed reaction is N(6)-dimethylallyladenosine(37) in tRNA + (sulfur carrier)-SH + AH2 + 2 S-adenosyl-L-methionine = 2-methylsulfanyl-N(6)-dimethylallyladenosine(37) in tRNA + (sulfur carrier)-H + 5'-deoxyadenosine + L-methionine + A + S-adenosyl-L-homocysteine + 2 H(+). In terms of biological role, catalyzes the methylthiolation of N6-(dimethylallyl)adenosine (i(6)A), leading to the formation of 2-methylthio-N6-(dimethylallyl)adenosine (ms(2)i(6)A) at position 37 in tRNAs that read codons beginning with uridine. This is tRNA-2-methylthio-N(6)-dimethylallyladenosine synthase from Pseudoalteromonas translucida (strain TAC 125).